Reading from the N-terminus, the 332-residue chain is Ketol-acid reductoisomerase (NADP(+)) (332 aa).

The KARI N-terminal Rossmann domain occupies 2–182 (ANIYYDEDAS…GATRAGLIET (181 aa)). NADP(+)-binding positions include 25-28 (YGSQ), S51, S53, and 83-86 (DTVQ). H108 is a catalytic residue. Residue G134 participates in NADP(+) binding. Positions 183-327 (TFKEETETDL…KELRKMMPWL (145 aa)) constitute a KARI C-terminal knotted domain. Positions 191, 195, 227, and 231 each coordinate Mg(2+). Substrate is bound at residue S252.

It belongs to the ketol-acid reductoisomerase family. It depends on Mg(2+) as a cofactor.

It catalyses the reaction (2R)-2,3-dihydroxy-3-methylbutanoate + NADP(+) = (2S)-2-acetolactate + NADPH + H(+). The catalysed reaction is (2R,3R)-2,3-dihydroxy-3-methylpentanoate + NADP(+) = (S)-2-ethyl-2-hydroxy-3-oxobutanoate + NADPH + H(+). It functions in the pathway amino-acid biosynthesis; L-isoleucine biosynthesis; L-isoleucine from 2-oxobutanoate: step 2/4. The protein operates within amino-acid biosynthesis; L-valine biosynthesis; L-valine from pyruvate: step 2/4. Functionally, involved in the biosynthesis of branched-chain amino acids (BCAA). Catalyzes an alkyl-migration followed by a ketol-acid reduction of (S)-2-acetolactate (S2AL) to yield (R)-2,3-dihydroxy-isovalerate. In the isomerase reaction, S2AL is rearranged via a Mg-dependent methyl migration to produce 3-hydroxy-3-methyl-2-ketobutyrate (HMKB). In the reductase reaction, this 2-ketoacid undergoes a metal-dependent reduction by NADPH to yield (R)-2,3-dihydroxy-isovalerate. This chain is Ketol-acid reductoisomerase (NADP(+)), found in Sulfurihydrogenibium sp. (strain YO3AOP1).